A 90-amino-acid polypeptide reads, in one-letter code: U7-theraphotoxin-Hhn1f (90 aa).

An N-terminal signal peptide occupies residues 1–19; it reads MKTAIFTVVLALAVFAVLS. The propeptide occupies 20–50; sequence FGWEANEKALSEEFTELIHEKEAASETEARG. 3 disulfides stabilise this stretch: Cys-51/Cys-65, Cys-58/Cys-70, and Cys-64/Cys-81.

It belongs to the neurotoxin 10 (Hwtx-1) family. 13 (Hntx-13) subfamily. Expressed by the venom gland.

The protein localises to the secreted. Its function is as follows. Ion channel inhibitor. The chain is U7-theraphotoxin-Hhn1f from Cyriopagopus hainanus (Chinese bird spider).